Reading from the N-terminus, the 348-residue chain is tRNA N6-adenosine threonylcarbamoyltransferase (348 aa).

Fe cation-binding residues include histidine 119 and histidine 123. Residues leucine 141–glycine 145, aspartate 174, glycine 187, aspartate 191, and asparagine 280 each bind substrate. Aspartate 310 contributes to the Fe cation binding site.

It belongs to the KAE1 / TsaD family. Fe(2+) is required as a cofactor.

It is found in the cytoplasm. It catalyses the reaction L-threonylcarbamoyladenylate + adenosine(37) in tRNA = N(6)-L-threonylcarbamoyladenosine(37) in tRNA + AMP + H(+). Its function is as follows. Required for the formation of a threonylcarbamoyl group on adenosine at position 37 (t(6)A37) in tRNAs that read codons beginning with adenine. Is involved in the transfer of the threonylcarbamoyl moiety of threonylcarbamoyl-AMP (TC-AMP) to the N6 group of A37, together with TsaE and TsaB. TsaD likely plays a direct catalytic role in this reaction. In Enterococcus faecalis (strain ATCC 700802 / V583), this protein is tRNA N6-adenosine threonylcarbamoyltransferase.